Consider the following 117-residue polypeptide: Aspartate 1-decarboxylase (117 aa).

The active-site Schiff-base intermediate with substrate; via pyruvic acid is the serine 25. Serine 25 carries the pyruvic acid (Ser) modification. Residue threonine 57 participates in substrate binding. Tyrosine 58 functions as the Proton donor in the catalytic mechanism. 72-74 contributes to the substrate binding site; it reads GAA.

The protein belongs to the PanD family. As to quaternary structure, heterooctamer of four alpha and four beta subunits. Pyruvate serves as cofactor. In terms of processing, is synthesized initially as an inactive proenzyme, which is activated by self-cleavage at a specific serine bond to produce a beta-subunit with a hydroxyl group at its C-terminus and an alpha-subunit with a pyruvoyl group at its N-terminus.

The protein localises to the cytoplasm. The catalysed reaction is L-aspartate + H(+) = beta-alanine + CO2. It participates in cofactor biosynthesis; (R)-pantothenate biosynthesis; beta-alanine from L-aspartate: step 1/1. In terms of biological role, catalyzes the pyruvoyl-dependent decarboxylation of aspartate to produce beta-alanine. The chain is Aspartate 1-decarboxylase from Helicobacter pylori (strain J99 / ATCC 700824) (Campylobacter pylori J99).